The primary structure comprises 310 residues: Homoserine O-acetyltransferase (310 aa).

Residue Cys-142 is the Acyl-thioester intermediate of the active site. Substrate is bound by residues Lys-163 and Ser-192. His-235 acts as the Proton acceptor in catalysis. The active site involves Glu-237. Arg-249 is a binding site for substrate.

This sequence belongs to the MetA family.

The protein resides in the cytoplasm. The catalysed reaction is L-homoserine + acetyl-CoA = O-acetyl-L-homoserine + CoA. It participates in amino-acid biosynthesis; L-methionine biosynthesis via de novo pathway; O-acetyl-L-homoserine from L-homoserine: step 1/1. In terms of biological role, transfers an acetyl group from acetyl-CoA to L-homoserine, forming acetyl-L-homoserine. The protein is Homoserine O-acetyltransferase of Lachnospira eligens (strain ATCC 27750 / DSM 3376 / VPI C15-48 / C15-B4) (Eubacterium eligens).